A 432-amino-acid polypeptide reads, in one-letter code: CBL-interacting serine/threonine-protein kinase 17 (432 aa).

A Protein kinase domain is found at 11-266 (YELGRTLGEG…IAGIKAHDWF (256 aa)). ATP is bound by residues 17–25 (LGEGNSAKV) and Lys40. The active-site Proton acceptor is the Asp134. The segment at 152–181 (DFGLSALSQHYREDGLLHTTCGSPNYVAPE) is activation loop. At Ser156 the chain carries Phosphoserine. A Phosphothreonine modification is found at Thr170. The region spanning 301 to 325 (DSPTIINAFQLIGMSSFLDLSGFFE) is the NAF domain. The segment at 331–360 (ERQIRFTSNSLAKDLLENIETIFTEMGFCL) is PPI.

It belongs to the protein kinase superfamily. CAMK Ser/Thr protein kinase family. SNF1 subfamily. Interacts with CBL1. It depends on Mn(2+) as a cofactor.

The enzyme catalyses L-seryl-[protein] + ATP = O-phospho-L-seryl-[protein] + ADP + H(+). The catalysed reaction is L-threonyl-[protein] + ATP = O-phospho-L-threonyl-[protein] + ADP + H(+). In terms of biological role, CIPK serine-threonine protein kinases interact with CBL proteins. Binding of a CBL protein to the regulatory NAF domain of CIPK protein lead to the activation of the kinase in a calcium-dependent manner. The polypeptide is CBL-interacting serine/threonine-protein kinase 17 (CIPK17) (Arabidopsis thaliana (Mouse-ear cress)).